The chain runs to 331 residues: Protein PER1 homolog (331 aa).

An N-terminal signal peptide occupies residues 1 to 24 (MRVLRNFTIFFLFTALSLFRQISA). Residues 25–100 (SAGDLHPVYV…QYHGKWYFIR (76 aa)) lie on the Lumenal side of the membrane. The helical transmembrane segment at 101–121 (VFGIQELFSVFFSMLNFMIHY) threads the bilayer. Over 122 to 139 (NGYHIMRRCIPDEHPAKR) the chain is Cytoplasmic. A helical membrane pass occupies residues 140 to 160 (LCLSWAIVGMNAWVWSSVFHI). The Lumenal segment spans residues 161–168 (RDTPITEK). Residues 169 to 189 (LDYFSAGAFVLFGSYCTLILM) traverse the membrane as a helical segment. Topologically, residues 190–199 (LRLDQLPGGK) are cytoplasmic. Residues 200–220 (LLCWIIGVIFIAAFIAHVSYL) form a helical membrane-spanning segment. At 221–232 (SFYSFDYGYNMK) the chain is on the lumenal side. The chain crosses the membrane as a helical span at residues 233-250 (ANVAVGLVQNILWYYYSW). Over 251–263 (SNRNSGLYWTRWP) the chain is Cytoplasmic. A helical transmembrane segment spans residues 264-284 (AYIVTSLMLATSLELFDFSPI). Topologically, residues 285–289 (ANLID) are lumenal. A helical membrane pass occupies residues 290 to 310 (AHALWHLSTVPITHYLYGFVV). Topologically, residues 311-331 (RKCSYDLTKGTFKIKAYDSSR) are cytoplasmic.

Belongs to the PGAP3/PER1 family.

The protein resides in the endoplasmic reticulum membrane. The protein localises to the vacuole membrane. Involved in the lipid remodeling steps of GPI-anchor maturation. Lipid remodeling steps consist in the generation of 2 saturated fatty chains at the sn-2 position of GPI-anchors proteins. Required for phospholipase A2 activity that removes an acyl-chain at the sn-2 position of GPI-anchors during the remodeling of GPI. Required for efficient transport of GPI-anchor proteins. The sequence is that of Protein PER1 homolog from Schizosaccharomyces pombe (strain 972 / ATCC 24843) (Fission yeast).